The chain runs to 245 residues: Protein DEHYDRATION-INDUCED 19 homolog 4 (245 aa).

The protein belongs to the Di19 family.

The protein is Protein DEHYDRATION-INDUCED 19 homolog 4 (DI19-4) of Oryza sativa subsp. japonica (Rice).